We begin with the raw amino-acid sequence, 238 residues long: UDP-2,3-diacylglucosamine hydrolase (238 aa).

5 residues coordinate Mn(2+): aspartate 8, histidine 10, aspartate 41, asparagine 78, and histidine 113. Substrate is bound at residue 78-79 (NR). Substrate contacts are provided by aspartate 121, serine 159, asparagine 163, lysine 166, and histidine 194. Histidine 194 and histidine 196 together coordinate Mn(2+).

Belongs to the LpxH family. Mn(2+) serves as cofactor.

The protein localises to the cell inner membrane. The enzyme catalyses UDP-2-N,3-O-bis[(3R)-3-hydroxytetradecanoyl]-alpha-D-glucosamine + H2O = 2-N,3-O-bis[(3R)-3-hydroxytetradecanoyl]-alpha-D-glucosaminyl 1-phosphate + UMP + 2 H(+). It functions in the pathway glycolipid biosynthesis; lipid IV(A) biosynthesis; lipid IV(A) from (3R)-3-hydroxytetradecanoyl-[acyl-carrier-protein] and UDP-N-acetyl-alpha-D-glucosamine: step 4/6. Functionally, hydrolyzes the pyrophosphate bond of UDP-2,3-diacylglucosamine to yield 2,3-diacylglucosamine 1-phosphate (lipid X) and UMP by catalyzing the attack of water at the alpha-P atom. Involved in the biosynthesis of lipid A, a phosphorylated glycolipid that anchors the lipopolysaccharide to the outer membrane of the cell. The polypeptide is UDP-2,3-diacylglucosamine hydrolase (Shewanella pealeana (strain ATCC 700345 / ANG-SQ1)).